Consider the following 1520-residue polypeptide: Integrator complex subunit 3 homolog (1520 aa).

6 disordered regions span residues 1 to 23, 523 to 671, 689 to 801, 813 to 922, 1116 to 1177, and 1489 to 1520; these read MMNQ…QQLT, QLHS…NSRV, VISQ…SPST, DEPP…QNIK, FSNS…NITN, and QSSN…FRKE. Composition is skewed to low complexity over residues 527–549 and 557–595; these read QQQQ…QQPP and QPIN…QQQP. Positions 596-612 are enriched in pro residues; it reads PQQPPPQQQPQQQPPQQ. Over residues 613-625 the composition is skewed to low complexity; the sequence is QPQQQPQQQQPQL. Residues 626–639 are compositionally biased toward polar residues; sequence NISTGNLPNIQQPM. Composition is skewed to low complexity over residues 642 to 669, 694 to 717, and 725 to 735; these read SPPL…TNNS, PQSQ…SPPL, and QQQPSQQLPSQ. Polar residues predominate over residues 736–752; it reads IVKNSPPNLSMTNENIS. Positions 768 to 789 are enriched in low complexity; that stretch reads SPLINSSNSNITTPNPDSQSQI. A compositionally biased stretch (polar residues) spans 819–828; that stretch reads SKSSPTQSNI. A compositionally biased stretch (low complexity) spans 837 to 882; the sequence is PPQTTISSSSPLLQPQTQPQPQTQPQPQTLQQSTTPSLSSSSTPTI. Positions 898–918 are enriched in pro residues; that stretch reads QPPPPPPSSQPLQPPPPPPPS. Low complexity-rich tracts occupy residues 1116–1130 and 1137–1177; these read FSNS…NNNN and QQQQ…NITN. Residues 1489 to 1504 show a composition bias toward polar residues; sequence QSSNIKNDNNPTLSKH.

It belongs to the Integrator subunit 3 family. Component of the Integrator complex. The core complex associates with protein phosphatase 2A subunits, to form the Integrator-PP2A (INTAC) complex. Component of the SOSS complex.

It localises to the nucleus. It is found in the cytoplasm. Functionally, component of the integrator complex, a multiprotein complex that terminates RNA polymerase II (Pol II) transcription in the promoter-proximal region of genes. The integrator complex provides a quality checkpoint during transcription elongation by driving premature transcription termination of transcripts that are unfavorably configured for transcriptional elongation: the complex terminates transcription by (1) catalyzing dephosphorylation of the C-terminal domain (CTD) of Pol II subunit polr2a, (2) degrading the exiting nascent RNA transcript via endonuclease activity and (3) promoting the release of Pol II from bound DNA. The integrator complex is also involved in terminating the synthesis of non-coding Pol II transcripts, such as enhancer RNAs (eRNAs), small nuclear RNAs (snRNAs), telomerase RNAs and long non-coding RNAs (lncRNAs). Component of the SOSS complex, a multiprotein complex that functions downstream of the MRN complex to promote DNA repair and G2/M checkpoint. The SOSS complex associates with single-stranded DNA at DNA lesions and influences diverse endpoints in the cellular DNA damage response including cell-cycle checkpoint activation, recombinational repair and maintenance of genomic stability. The SOSS complex is required for efficient homologous recombination-dependent repair of double-strand breaks (DSBs) and ATM-dependent signaling pathways. In the SOSS complex, it is required for the assembly of the complex and for stabilization of the complex at DNA damage sites. The protein is Integrator complex subunit 3 homolog (ints3) of Dictyostelium discoideum (Social amoeba).